The sequence spans 367 residues: Dual specificity protein phosphatase 1 (367 aa).

The 118-residue stretch at 20-137 (RAAQCLLLDC…FSASCPELCS (118 aa)) folds into the Rhodanese domain. Residues 173 to 314 (GPVEILPFLY…LLQFESQVLA (142 aa)) enclose the Tyrosine-protein phosphatase domain. The active-site Phosphocysteine intermediate is the Cys258. Ser359 and Ser364 each carry phosphoserine; by MAPK1 and MAPK3.

This sequence belongs to the protein-tyrosine phosphatase family. Non-receptor class dual specificity subfamily. Phosphorylation at Ser-359 and Ser-364 by MAPK1/ERK2 and MAPK3/ERK1 reduces its rate of degradation. In terms of processing, 'Lys-48'-linked polyubiquitinated by NEURL3, leading to proteasomal degradation. In terms of tissue distribution, expressed at high levels in the lung, liver placenta and pancreas. Moderate levels seen in the heart and skeletal muscle. Lower levels found in the brain and kidney.

It is found in the nucleus. It catalyses the reaction O-phospho-L-tyrosyl-[protein] + H2O = L-tyrosyl-[protein] + phosphate. It carries out the reaction O-phospho-L-seryl-[protein] + H2O = L-seryl-[protein] + phosphate. The catalysed reaction is O-phospho-L-threonyl-[protein] + H2O = L-threonyl-[protein] + phosphate. Functionally, dual specificity phosphatase that dephosphorylates MAP kinase MAPK1/ERK2 on both 'Thr-183' and 'Tyr-185', regulating its activity during the meiotic cell cycle. The chain is Dual specificity protein phosphatase 1 from Homo sapiens (Human).